We begin with the raw amino-acid sequence, 1007 residues long: Kinesin-like protein KIN-7D, chloroplastic (1007 aa).

Residues 1-53 constitute a chloroplast transit peptide; the sequence is MATRPASRQRRASSAAAAVAVVRSSPQPQQQQQQQLPIPQSGSPTSTTTTTTS. Over residues 1–55 the composition is skewed to low complexity; it reads MATRPASRQRRASSAAAAVAVVRSSPQPQQQQQQQLPIPQSGSPTSTTTTTTSSS. The disordered stretch occupies residues 1-79; sequence MATRPASRQR…LFAGLDEDPA (79 aa). A Kinesin motor domain is found at 83 to 402; sequence NVTVTVRFRP…LKFAHRAKRI (320 aa). An ATP-binding site is contributed by 163–170; the sequence is GVTSSGKT. Residues 403–495 are a coiled coil; sequence EVQASQNKII…QRLTKLILVS (93 aa). The disordered stretch occupies residues 579-607; sequence ILTSSEGDKSSLTKSTAPSTPIGESVNFP. Coiled-coil stretches lie at residues 687–716, 754–791, and 836–907; these read NNEKIQMEMKKVNDEIKGKKHQIASLERQI, AADNRVIQDQLNEKTTECMELQEEVAHLKEQLYQTLQA, and SVEI…SVRS. The tract at residues 901 to 941 is disordered; the sequence is ELASVRSPTPRRANSGLRGTRRDSISRRHEPAPRRDNNAGY. The segment covering 920–941 has biased composition (basic and acidic residues); the sequence is TRRDSISRRHEPAPRRDNNAGY. Residues 942–982 are a coiled coil; that stretch reads EREKALEAVLMEKEQKEAELQRRIEESKQKEAFLESELANM.

Belongs to the TRAFAC class myosin-kinesin ATPase superfamily. Kinesin family. KIN-7 subfamily. Binds microtubules. Homodimer. It depends on Mg(2+) as a cofactor.

The protein resides in the plastid. Its subcellular location is the chloroplast. In terms of biological role, probable minus end-directed motor protein with a microtubule-enhanced ATPase activity. Binds ATP/ADP in vitro. Retains total enzymatic activity even after the removal of the ADP bound in the active site. This Oryza sativa subsp. japonica (Rice) protein is Kinesin-like protein KIN-7D, chloroplastic.